We begin with the raw amino-acid sequence, 1752 residues long: DNA-directed RNA polymerase II subunit rpb1 (1752 aa).

The Zn(2+) site is built by Cys-69, Cys-72, Cys-79, His-82, Cys-109, Cys-112, Cys-150, and Cys-175. Residues Asp-487, Asp-489, and Asp-491 each coordinate Mg(2+). The segment at 816–828 is bridging helix; that stretch reads PQEFFFHAMAGRE. Lys-1252 is covalently cross-linked (Glycyl lysine isopeptide (Lys-Gly) (interchain with G-Cter in ubiquitin)). Ser-1489, Ser-1499, Ser-1506, and Ser-1529 each carry phosphoserine. Tyr-1531 carries the post-translational modification Phosphotyrosine. A disordered region spans residues 1554 to 1752; that stretch reads TSPSYSPSSP…SPSYSPTSPS (199 aa). 5 tandem repeats follow at residues 1558-1564, 1578-1584, 1585-1591, 1592-1598, and 1599-1605. Residues 1558 to 1752 form a C-terminal domain (CTD); 26 X 7 AA approximate tandem repeats of Y-S-P-[TS]-S-P-S region; the sequence is YSPSSPGYST…SPSYSPTSPS (195 aa). The stretch at 1606-1612 is one 6; approximate repeat; the sequence is YSATSPS. 20 repeat units span residues 1613-1619, 1620-1626, 1627-1633, 1634-1640, 1641-1647, 1648-1654, 1655-1661, 1662-1668, 1669-1675, 1676-1682, 1683-1689, 1690-1696, 1697-1703, 1704-1710, 1711-1717, 1718-1724, 1725-1731, 1732-1738, 1739-1745, and 1746-1752.

This sequence belongs to the RNA polymerase beta' chain family. Component of the RNA polymerase II (Pol II) complex consisting of 12 subunits. In terms of processing, the tandem 7 residues repeats in the C-terminal domain (CTD) can be highly phosphorylated. The phosphorylation activates Pol II. Phosphorylation occurs mainly at residues 'Ser-2' and 'Ser-5' of the heptapeptide repeat. The phosphorylation state is believed to result from the balanced action of site-specific CTD kinases and phosphatase, and a 'CTD code' that specifies the position of Pol II within the transcription cycle has been proposed. Post-translationally, following transcription stress, the elongating form of RNA polymerase II (RNA pol IIo) is polyubiquitinated via 'Lys-63'-linkages on Lys-1252 at DNA damage sites without leading to degradation: ubiquitination promotes RNA pol IIo backtracking to allow access by the transcription-coupled nucleotide excision repair (TC-NER) machinery. Subsequent def1-dependent polyubiquitination by the elongin complex via 'Lys-48'-linkages may lead to proteasome-mediated degradation; presumably at stalled RNA pol II where TC-NER has failed, to halt global transcription and enable 'last resort' DNA repair pathways.

The protein resides in the nucleus. The catalysed reaction is RNA(n) + a ribonucleoside 5'-triphosphate = RNA(n+1) + diphosphate. Functionally, DNA-dependent RNA polymerase catalyzes the transcription of DNA into RNA using the four ribonucleoside triphosphates as substrates. Largest and catalytic component of RNA polymerase II which synthesizes mRNA precursors and many functional non-coding RNAs. Forms the polymerase active center together with the second largest subunit. Pol II is the central component of the basal RNA polymerase II transcription machinery. It is composed of mobile elements that move relative to each other. RPB1 is part of the core element with the central large cleft, the clamp element that moves to open and close the cleft and the jaws that are thought to grab the incoming DNA template. At the start of transcription, a single-stranded DNA template strand of the promoter is positioned within the central active site cleft of Pol II. A bridging helix emanates from RPB1 and crosses the cleft near the catalytic site and is thought to promote translocation of Pol II by acting as a ratchet that moves the RNA-DNA hybrid through the active site by switching from straight to bent conformations at each step of nucleotide addition. During transcription elongation, Pol II moves on the template as the transcript elongates. Elongation is influenced by the phosphorylation status of the C-terminal domain (CTD) of Pol II largest subunit (RPB1), which serves as a platform for assembly of factors that regulate transcription initiation, elongation, termination and mRNA processing. This Schizosaccharomyces pombe (strain 972 / ATCC 24843) (Fission yeast) protein is DNA-directed RNA polymerase II subunit rpb1 (rpb1).